A 405-amino-acid polypeptide reads, in one-letter code: Cytoplasmic tRNA 2-thiolation protein 2 (405 aa).

This sequence belongs to the CTU2/NCS2 family.

It localises to the cytoplasm. It functions in the pathway tRNA modification; 5-methoxycarbonylmethyl-2-thiouridine-tRNA biosynthesis. In terms of biological role, plays a central role in 2-thiolation of mcm(5)S(2)U at tRNA wobble positions of tRNA(Lys), tRNA(Glu) and tRNA(Gln). May act by forming a heterodimer with NCS6/CTU1 that ligates sulfur from thiocarboxylated URM1 onto the uridine of tRNAs at wobble position. The sequence is that of Cytoplasmic tRNA 2-thiolation protein 2 from Drosophila simulans (Fruit fly).